We begin with the raw amino-acid sequence, 1196 residues long: Nucleolar protein 6 (1196 aa).

2 disordered regions span residues 1 to 75 and 1140 to 1196; these read MPGK…VKPP and KREQ…KALK. Positions 22–31 are enriched in basic and acidic residues; sequence HAEDHSDLEH. Residues 1165 to 1174 are compositionally biased toward basic residues; it reads KPKKHRKRKG.

It belongs to the NRAP family. In terms of assembly, part of the small subunit (SSU) processome, composed of more than 70 proteins and the RNA chaperone small nucleolar RNA (snoRNA) U3.

It localises to the nucleus. The protein resides in the nucleolus. Its subcellular location is the chromosome. Part of the small subunit (SSU) processome, first precursor of the small eukaryotic ribosomal subunit. During the assembly of the SSU processome in the nucleolus, many ribosome biogenesis factors, an RNA chaperone and ribosomal proteins associate with the nascent pre-rRNA and work in concert to generate RNA folding, modifications, rearrangements and cleavage as well as targeted degradation of pre-ribosomal RNA by the RNA exosome. The chain is Nucleolar protein 6 from Drosophila sechellia (Fruit fly).